Consider the following 130-residue polypeptide: Large ribosomal subunit protein bL12 (130 aa).

The protein belongs to the bacterial ribosomal protein bL12 family. In terms of assembly, homodimer. Part of the ribosomal stalk of the 50S ribosomal subunit. Forms a multimeric L10(L12)X complex, where L10 forms an elongated spine to which 2 to 4 L12 dimers bind in a sequential fashion. Binds GTP-bound translation factors.

Forms part of the ribosomal stalk which helps the ribosome interact with GTP-bound translation factors. Is thus essential for accurate translation. The chain is Large ribosomal subunit protein bL12 from Mycobacterium leprae (strain TN).